Reading from the N-terminus, the 181-residue chain is Probable calcium-binding protein CML43 (181 aa).

EF-hand domains lie at L24–D59, S107–P142, and G145–P180. The Ca(2+) site is built by D37, N39, D41, E48, D120, D122, D124, E131, D158, N160, D162, R164, and E169.

As to expression, expressed specifically in roots.

Calcium-binding protein that may mediate calcium-dependent signal during plant defense response. The sequence is that of Probable calcium-binding protein CML43 (CML43) from Arabidopsis thaliana (Mouse-ear cress).